The chain runs to 607 residues: Glutamine--fructose-6-phosphate aminotransferase [isomerizing] (607 aa).

C2 acts as the Nucleophile; for GATase activity in catalysis. A Glutamine amidotransferase type-2 domain is found at C2 to D217. SIS domains are found at residues L283 to V422 and I455 to P597. Residue K602 is the For Fru-6P isomerization activity of the active site.

As to quaternary structure, homodimer.

It localises to the cytoplasm. It catalyses the reaction D-fructose 6-phosphate + L-glutamine = D-glucosamine 6-phosphate + L-glutamate. Functionally, catalyzes the first step in hexosamine metabolism, converting fructose-6P into glucosamine-6P using glutamine as a nitrogen source. In Mesorhizobium japonicum (strain LMG 29417 / CECT 9101 / MAFF 303099) (Mesorhizobium loti (strain MAFF 303099)), this protein is Glutamine--fructose-6-phosphate aminotransferase [isomerizing].